The sequence spans 781 residues: ATP-dependent 6-phosphofructokinase (781 aa).

The N-terminal catalytic PFK domain 1 stretch occupies residues 1-394 (MATWMEGKYV…NLATYIKLSK (394 aa)). ATP-binding positions include glycine 27, 90-91 (RC), and 120-123 (GDGS). Aspartate 121 contributes to the Mg(2+) binding site. Residues 166–168 (SID), arginine 203, 210–212 (MGR), glutamate 266, arginine 294, and 300–303 (HVQR) contribute to the substrate site. The Proton acceptor role is filled by aspartate 168. The interdomain linker stretch occupies residues 395 to 409 (IEQPRQSVMSSENNL). The segment at 410–781 (RIGIVNVGAP…ESIMAGTDRK (372 aa)) is C-terminal regulatory PFK domain 2. Residues arginine 479, 537 to 541 (TISNN), arginine 575, 582 to 584 (MGG), aspartate 638, arginine 664, 670 to 673 (HMQQ), and arginine 745 each bind beta-D-fructose 2,6-bisphosphate.

The protein belongs to the phosphofructokinase type A (PFKA) family. ATP-dependent PFK group I subfamily. Eukaryotic two domain clade 'E' sub-subfamily. Homotetramer. It depends on Mg(2+) as a cofactor.

It is found in the cytoplasm. It catalyses the reaction beta-D-fructose 6-phosphate + ATP = beta-D-fructose 1,6-bisphosphate + ADP + H(+). It participates in carbohydrate degradation; glycolysis; D-glyceraldehyde 3-phosphate and glycerone phosphate from D-glucose: step 3/4. Its activity is regulated as follows. Allosterically activated by ADP, AMP, or fructose 2,6-bisphosphate, and allosterically inhibited by ATP or citrate. In terms of biological role, catalyzes the phosphorylation of D-fructose 6-phosphate to fructose 1,6-bisphosphate by ATP, the first committing step of glycolysis. This chain is ATP-dependent 6-phosphofructokinase (PFK), found in Schistosoma mansoni (Blood fluke).